Here is a 139-residue protein sequence, read N- to C-terminus: Small ribosomal subunit protein bS6 (139 aa).

Residues 120 to 139 (KGASKVETPTGPESTDIQEK) form a disordered region. A compositionally biased stretch (polar residues) spans 130-139 (GPESTDIQEK).

Belongs to the bacterial ribosomal protein bS6 family.

Binds together with bS18 to 16S ribosomal RNA. The protein is Small ribosomal subunit protein bS6 (rpsF) of Borreliella burgdorferi (strain ATCC 35210 / DSM 4680 / CIP 102532 / B31) (Borrelia burgdorferi).